A 53-amino-acid chain; its full sequence is Mitochondrial sheath formation-associated protein (53 aa).

Mitochondrial intermembrane segments follow at residues 1-6 (MIVLGW) and 1-7 (MIVLGWM). 2 consecutive transmembrane segments (helical) span residues 7-23 (MLFV…PEAM) and 8-24 (LFVG…EAMP). 2 consecutive stretches face the cytoplasmic side: residues 24-53 (PPTL…ELLL) and 25-40 (PTLK…ENKA).

As to quaternary structure, interacts with VDAC3. As to expression, testis specific. Detected only in germ cells at the step of spermiogenesis (at protein level). Expressed during the middle steps of spermatid development. Testis specific. Detected only in germ cells at the step of spermiogenesis (at protein level). Expressed in the late steps of spermatid development.

Its subcellular location is the mitochondrion outer membrane. Regulates sperm development. May be involved in mitochondrial sheath formation. In Mus musculus (Mouse), this protein is Mitochondrial sheath formation-associated protein.